Reading from the N-terminus, the 213-residue chain is A-type ATP synthase subunit D (213 aa).

The protein belongs to the V-ATPase D subunit family. In terms of assembly, has multiple subunits with at least A(3), B(3), C, D, E, F, H, I and proteolipid K(x).

Its subcellular location is the cell membrane. Functionally, component of the A-type ATP synthase that produces ATP from ADP in the presence of a proton gradient across the membrane. This chain is A-type ATP synthase subunit D, found in Thermoplasma acidophilum (strain ATCC 25905 / DSM 1728 / JCM 9062 / NBRC 15155 / AMRC-C165).